The primary structure comprises 385 residues: Probable protein phosphatase 2C 79 (385 aa).

A signal peptide spans 1-18; sequence MLSLFFNFLTSCLWPSSS. The PPM-type phosphatase domain maps to 47 to 356; the sequence is DFSMAVVQAN…DDITVVVLFL (310 aa). The residue at position 76 (S76) is a Phosphoserine. 4 residues coordinate Mn(2+): D87, G88, D288, and D347.

This sequence belongs to the PP2C family. It depends on Mg(2+) as a cofactor. Mn(2+) serves as cofactor.

The catalysed reaction is O-phospho-L-seryl-[protein] + H2O = L-seryl-[protein] + phosphate. It carries out the reaction O-phospho-L-threonyl-[protein] + H2O = L-threonyl-[protein] + phosphate. In terms of biological role, may dephosphorylate and repress plasma membrane H(+)-ATPases (PM H(+)-ATPases, e.g. AHA1 and AHA2), thus influencing negatively plant growth and fitness. This is Probable protein phosphatase 2C 79 from Arabidopsis thaliana (Mouse-ear cress).